The chain runs to 599 residues: Omega-hydroxyceramide transacylase (599 aa).

Residues 16–185 (ISFSGSGFLS…TSMQPCSFWT (170 aa)) enclose the PNPLA domain. Residues 51 to 55 (GTSAG) carry the GXSXG motif. Ser53 (nucleophile) is an active-site residue. The active-site Proton acceptor is the Asp172. Residues 172 to 174 (DGG) carry the DGA/G motif. Residues 289–563 (PPPPSLQNLP…PASKLKSAPC (275 aa)) form a disordered region. Composition is skewed to polar residues over residues 325–335 (SSAAPSVQTPE) and 350–362 (VSIS…SPLS). Low complexity predominate over residues 443–454 (SPESPRLLLRSS). Residues 468-478 (PLSPSTPPAGP) are compositionally biased toward pro residues. The segment covering 490-501 (ATGSPALSQLTG) has biased composition (polar residues). The span at 551–563 (SKKPASKLKSAPC) shows a compositional bias: low complexity.

In terms of tissue distribution, specifically expressed in skin by keratinocytes, at the boundary area between the nucleated stratum granulosum and the denucleated stratum corneum in the epidermis (at protein level). Also expressed in stomach and other surface lining tissues like intestine and tongue. Also detected in testis as well as in other tissues but at very low level.

It localises to the cytoplasm. The enzyme catalyses an N-(omega-hydroxy-ultra-long chain fatty acyl)-sphingoid base + a (9Z,12Z)-octadecadienoyl-containing triacyl-sn-glycerol = an N-[omega-(9Z,12Z-octadecadienoyloxy)-O-ultra-long chain fatty acyl]-sphingoid base + a diacylglycerol. The catalysed reaction is an N-(omega-hydroxy-ultra-long chain fatty acyl)-sphing-4-enine + a (9Z,12Z)-octadecadienoyl-containing triacyl-sn-glycerol = an N-(omega-(9Z,12Z-octadecadienoyloxy)-ultra-long chain fatty acyl)-sphing-4-enine + a diacylglycerol. It carries out the reaction N-(28-hydroxyoctacosanoyl)-sphing-4-enine + a (9Z,12Z)-octadecadienoyl-containing triacyl-sn-glycerol = N-(28-(9Z,12Z-octadecadienoyloxy)-octacosanoyl)-sphing-4-enine + a diacylglycerol. It catalyses the reaction N-(30-hydroxytriacontanoyl)-sphing-4-enine + 1,2,3-tri-(9Z,12Z)-octadecadienoylglycerol = N-[30-(9Z,12Z-octadecadienoyloxy)-triacontanoyl]-sphing-4-enine + di-(9Z,12Z)-octadecadienoylglycerol. The enzyme catalyses N-(32-hydroxydotriacontanoyl)-sphing-4-enine + a (9Z,12Z)-octadecadienoyl-containing triacyl-sn-glycerol = N-(32-(9Z,12Z-octadecadienoyloxy)-dotricontanoyl)-sphing-4-enine + a diacylglycerol. The catalysed reaction is N-(32-hydroxydotriacontenoyl)-sphing-4-enine + a (9Z,12Z)-octadecadienoyl-containing triacyl-sn-glycerol = an N-(32-(9Z,12Z-octadecadienoyloxy)-dotriacontenoyl)-sphing-4-enine + a diacylglycerol. It carries out the reaction an N-(34-hydroxytetratriacontenoyl)-sphing-4-enine + a (9Z,12Z)-octadecadienoyl-containing triacyl-sn-glycerol = an N-(34-(9Z,12Z-octadecadienoyloxy)-tetratriacontenoyl)-sphing-4-enine + a diacylglycerol. It catalyses the reaction an N-(34-hydroxytetratriacontadienoyl)-sphing-4-enine + a (9Z,12Z)-octadecadienoyl-containing triacyl-sn-glycerol = an N-(34-(9Z,12Z-octadecadienoyloxy)-tetratriacontadienoyl)-sphing-4-enine + a diacylglycerol. The enzyme catalyses an N-(36-hydroxyhexatriacontenoyl)-sphing-4-enine + a (9Z,12Z)-octadecadienoyl-containing triacyl-sn-glycerol = an N-(36-(9Z,12Z-octadecadienoyloxy)-hexatriacontenoyl)-sphing-4-enine + a diacylglycerol. The catalysed reaction is an N-(36-hydroxyhexatriacontadienoyl)-sphing-4-enine + a (9Z,12Z)-octadecadienoyl-containing triacyl-sn-glycerol = an N-(36-(9Z,12Z-octadecadienoyloxy)-hexatriacontadienoyl)-sphing-4-enine + a diacylglycerol. It carries out the reaction an N-(38-hydroxyoctatriacontenoyl)-sphing-4-enine + a (9Z,12Z)-octadecadienoyl-containing triacyl-sn-glycerol = an N-(38-(9Z,12Z-octadecadienoyloxy)-octatriacontenoyl)-sphing-4-enine + a diacylglycerol. Functionally, omega-hydroxyceramide transacylase involved in the synthesis of omega-O-acylceramides (esterified omega-hydroxyacyl-sphingosine; EOS), which are extremely hydrophobic lipids involved in skin barrier formation. Catalyzes the last step of the synthesis of omega-O-acylceramides by transferring linoleic acid from triglycerides to an omega-hydroxyceramide. Omega-O-acylceramides, are required for the biogenesis of lipid lamellae in the stratum corneum and the formation of the cornified lipid envelope which are essential for the epidermis barrier function. These lipids also play a role in keratinocyte differentiation. May also act on omega-hydroxylated ultra-long chain fatty acids (omega-OH ULCFA) and acylglucosylceramides (GlcEOS). This is Omega-hydroxyceramide transacylase from Mus musculus (Mouse).